The sequence spans 125 residues: S-adenosylmethionine decarboxylase proenzyme (125 aa).

Ser71 functions as the Schiff-base intermediate with substrate; via pyruvic acid in the catalytic mechanism. Position 71 is a pyruvic acid (Ser); by autocatalysis (Ser71). The active-site Proton acceptor; for processing activity is His76. The active-site Proton donor; for catalytic activity is the Cys91.

This sequence belongs to the prokaryotic AdoMetDC family. Type 1 subfamily. Heterotetramer of two alpha and two beta chains arranged as a dimer of alpha/beta heterodimers. Pyruvate serves as cofactor. Post-translationally, is synthesized initially as an inactive proenzyme. Formation of the active enzyme involves a self-maturation process in which the active site pyruvoyl group is generated from an internal serine residue via an autocatalytic post-translational modification. Two non-identical subunits are generated from the proenzyme in this reaction, and the pyruvate is formed at the N-terminus of the alpha chain, which is derived from the carboxyl end of the proenzyme. The post-translation cleavage follows an unusual pathway, termed non-hydrolytic serinolysis, in which the side chain hydroxyl group of the serine supplies its oxygen atom to form the C-terminus of the beta chain, while the remainder of the serine residue undergoes an oxidative deamination to produce ammonia and the pyruvoyl group blocking the N-terminus of the alpha chain.

The enzyme catalyses S-adenosyl-L-methionine + H(+) = S-adenosyl 3-(methylsulfanyl)propylamine + CO2. It participates in amine and polyamine biosynthesis; S-adenosylmethioninamine biosynthesis; S-adenosylmethioninamine from S-adenosyl-L-methionine: step 1/1. Catalyzes the decarboxylation of S-adenosylmethionine to S-adenosylmethioninamine (dcAdoMet), the propylamine donor required for the synthesis of the polyamines spermine and spermidine from the diamine putrescine. The chain is S-adenosylmethionine decarboxylase proenzyme from Pyrobaculum arsenaticum (strain DSM 13514 / JCM 11321 / PZ6).